Reading from the N-terminus, the 184-residue chain is uncharacterized protein (184 aa).

This is an uncharacterized protein from Dictyostelium discoideum (Social amoeba).